The sequence spans 445 residues: MGLTSVHVGLDDTDSPLGLCTTFVALAIVREASRIGAGFADLPYLVRLNPNVPLKTRGNGAVAIHFLVEEELVPRVEEAVVRALDDLSERHGKTDPAAILVKGDVPRAFRSVYLRALTEFIPSSYVRSVLERFKGESVKLLYSRSKRPRGLVGAVASLGAYPLEDYTYELIVYRSPEERSESRDISEDLLLELDRKYRPLVFATYDYSSRRVLAVPHGPDPVIFGLRSLDPEILVNVAVDVLEKISHAGYLLFKTNQGTSAHLQRYKPVALVRPYDSVVVRGSVAEKPTVISGGHVIVNVCDETGCLQIAFYKETGRLNRVAKLLSRGDLVEVGGGVMKKDGLVLNAEYLRLIKPALNVKRLNPLCPKCGSRMTSAGKGKGYKCPKCGYRAKEAAKIYRVAPRTLEPGTYFQSPSAYRHLTKPPEILGLRPVDATKVLLSGMWFM.

The segment at residues 278–349 is a DNA-binding region (OB); sequence VVVRGSVAEK…KDGLVLNAEY (72 aa).

The protein belongs to the TiaS family.

Its subcellular location is the cytoplasm. It catalyses the reaction cytidine(34) in tRNA(Ile2) + agmatine + ATP + H2O = 2-agmatinylcytidine(34) in tRNA(Ile2) + AMP + 2 phosphate + 2 H(+). ATP-dependent agmatine transferase that catalyzes the formation of 2-agmatinylcytidine (agm2C) at the wobble position (C34) of tRNA(Ile2), converting the codon specificity from AUG to AUA. The chain is tRNA(Ile2) 2-agmatinylcytidine synthetase TiaS from Thermofilum pendens (strain DSM 2475 / Hrk 5).